A 345-amino-acid polypeptide reads, in one-letter code: MSTPTPLSYKDAGVDIDAGNALVQNIKSAVKRTRRPEVMGNLGGFGALCELPTKYKHPVLVSGTDGVGTKLRLAIDFKSHDTVGIDLVAMCVNDLIVQGAEPLFFLDYYATGKLDVETATSVVNGIGEGCFQSGCALIGGETAEMPGMYEGEDYDLAGFCVGVVEKADIIDGTKVKAGDALIALASSGPHSNGYSLIRKVLEVSKADPQMDLNGKPLIKHLLEPTKIYVKSLLKLIAESDVHAMAHITGGGFWENIPRVLPDNCKAVVQGDSWQWPVVFDWLQTAGNIETYEMYRTFNCGVGMIVALPADKVDAALELLKAEGENAWHIGHIAARNGDEEQVEIL.

This sequence belongs to the AIR synthase family.

It is found in the cytoplasm. The catalysed reaction is 2-formamido-N(1)-(5-O-phospho-beta-D-ribosyl)acetamidine + ATP = 5-amino-1-(5-phospho-beta-D-ribosyl)imidazole + ADP + phosphate + H(+). The protein operates within purine metabolism; IMP biosynthesis via de novo pathway; 5-amino-1-(5-phospho-D-ribosyl)imidazole from N(2)-formyl-N(1)-(5-phospho-D-ribosyl)glycinamide: step 2/2. The protein is Phosphoribosylformylglycinamidine cyclo-ligase of Shewanella amazonensis (strain ATCC BAA-1098 / SB2B).